The sequence spans 119 residues: Phospholipase A2 A2-actitoxin-Cgg2a (119 aa).

6 disulfide bridges follow: Cys25–Cys119, Cys27–Cys43, Cys42–Cys101, Cys49–Cys94, Cys61–Cys87, and Cys78–Cys92. Residues Gly28 and Gly30 each contribute to the Ca(2+) site. His46 is an active-site residue. Asp47 provides a ligand contact to Ca(2+). Asp95 is an active-site residue.

This sequence belongs to the phospholipase A2 family. As to quaternary structure, homodimer. Ca(2+) is required as a cofactor.

The protein resides in the secreted. The protein localises to the nematocyst. It catalyses the reaction a 1,2-diacyl-sn-glycero-3-phosphocholine + H2O = a 1-acyl-sn-glycero-3-phosphocholine + a fatty acid + H(+). Sea anemone phospholipase A2 (PLA2). When incubated with plasma, this protein shows a moderate anticoagulant activity (0.15 ug of enzyme/200 uL of plasma), inhibiting clotting induced by thrombin. This enzyme also induces myotoxicity, and edema. PLA2 catalyzes the calcium-dependent hydrolysis of the 2-acyl groups in 3-sn-phosphoglycerides. The sequence is that of Phospholipase A2 A2-actitoxin-Cgg2a from Condylactis gigantea (Giant Caribbean anemone).